The following is a 375-amino-acid chain: MISSRCKNIKPSAIREIFNLATSDCINLGIGEPDFDTPKHIIEAAKRALDEGKTHYSPNNGIPELREEISNKLKDDYNLDVDKDNIIVTCGASEALMLSIMTLIDRGDEVLIPNPSFVSYFSLTEFAEGKIKNIDLDENFNIDLEKVKESITKKTKLIIFNSPSNPTGKVYDKETIKGLAEIAEDYNLIIVSDEVYDKIIYDKKHYSPMQFTDRCILINGFSKTYAMTGWRIGYLAVSDELNKELDLINNMIKIHQYSFACATTFAQYGALAALRGSQKCVEDMVREFKMRRDLIYNGLKDIFKVNKPDGAFYIFPDVSEYGDGVEVAKKLIENKVLCVPGVAFGENGANYIRFSYATKYEDIEKALGIIKEIFE.

L-aspartate is bound by residues glycine 31 and asparagine 165. An N6-(pyridoxal phosphate)lysine modification is found at lysine 223. Arginine 353 serves as a coordination point for L-aspartate.

This sequence belongs to the class-I pyridoxal-phosphate-dependent aminotransferase family. In terms of assembly, homodimer. Pyridoxal 5'-phosphate is required as a cofactor.

The protein localises to the cytoplasm. The catalysed reaction is L-aspartate + 2-oxoglutarate = oxaloacetate + L-glutamate. This Methanocaldococcus jannaschii (strain ATCC 43067 / DSM 2661 / JAL-1 / JCM 10045 / NBRC 100440) (Methanococcus jannaschii) protein is Probable aspartate aminotransferase.